The primary structure comprises 84 residues: MAAQVTESDQIKQFKEFLGTYNKLTENCFMDCVKDFTTREVKPEETTCSESCLQKYLKMTQRISMRFQEYHIQQNERWPQKPDY.

A Twin CX3C motif motif is present at residues 28 to 52 (CFMDCVKDFTTREVKPEETTCSESC). 2 disulfides stabilise this stretch: Cys-28/Cys-52 and Cys-32/Cys-48.

This sequence belongs to the small Tim family. Heterohexamer; composed of 3 copies of TIMM9 and 3 copies of TIMM10/TIM10A, named soluble 70 kDa complex. The complex forms a 6-bladed alpha-propeller structure and associates with the TIMM22 component of the TIM22 complex. Interacts with multi-pass transmembrane proteins in transit.

Its subcellular location is the mitochondrion inner membrane. Mitochondrial intermembrane chaperone that participates in the import and insertion of multi-pass transmembrane proteins into the mitochondrial inner membrane. May also be required for the transfer of beta-barrel precursors from the TOM complex to the sorting and assembly machinery (SAM complex) of the outer membrane. Acts as a chaperone-like protein that protects the hydrophobic precursors from aggregation and guide them through the mitochondrial intermembrane space. The protein is Mitochondrial import inner membrane translocase subunit Tim9 (timm9) of Danio rerio (Zebrafish).